Here is a 396-residue protein sequence, read N- to C-terminus: 1-deoxy-D-xylulose 5-phosphate reductoisomerase (396 aa).

Residues T10, G11, S12, I13, G36, K37, N38, and N124 each contribute to the NADPH site. K125 provides a ligand contact to 1-deoxy-D-xylulose 5-phosphate. NADPH is bound at residue E126. D150 contacts Mn(2+). Residues S151, E152, S186, and H209 each contribute to the 1-deoxy-D-xylulose 5-phosphate site. Residue E152 coordinates Mn(2+). Residue G215 coordinates NADPH. 4 residues coordinate 1-deoxy-D-xylulose 5-phosphate: S222, N227, K228, and E231. E231 lines the Mn(2+) pocket.

Belongs to the DXR family. Mg(2+) serves as cofactor. It depends on Mn(2+) as a cofactor.

The enzyme catalyses 2-C-methyl-D-erythritol 4-phosphate + NADP(+) = 1-deoxy-D-xylulose 5-phosphate + NADPH + H(+). It participates in isoprenoid biosynthesis; isopentenyl diphosphate biosynthesis via DXP pathway; isopentenyl diphosphate from 1-deoxy-D-xylulose 5-phosphate: step 1/6. Catalyzes the NADPH-dependent rearrangement and reduction of 1-deoxy-D-xylulose-5-phosphate (DXP) to 2-C-methyl-D-erythritol 4-phosphate (MEP). This chain is 1-deoxy-D-xylulose 5-phosphate reductoisomerase, found in Actinobacillus pleuropneumoniae serotype 3 (strain JL03).